Consider the following 434-residue polypeptide: Glutamyl-tRNA reductase (434 aa).

Residues 49–52, serine 107, 112–114, and glutamine 118 contribute to the substrate site; these read TCNR and EPQ. The active-site Nucleophile is cysteine 50. Position 187-192 (187-192) interacts with NADP(+); sequence GAGETV.

Belongs to the glutamyl-tRNA reductase family. In terms of assembly, homodimer.

The enzyme catalyses (S)-4-amino-5-oxopentanoate + tRNA(Glu) + NADP(+) = L-glutamyl-tRNA(Glu) + NADPH + H(+). Its pathway is porphyrin-containing compound metabolism; protoporphyrin-IX biosynthesis; 5-aminolevulinate from L-glutamyl-tRNA(Glu): step 1/2. Its function is as follows. Catalyzes the NADPH-dependent reduction of glutamyl-tRNA(Glu) to glutamate 1-semialdehyde (GSA). This Hydrogenovibrio crunogenus (strain DSM 25203 / XCL-2) (Thiomicrospira crunogena) protein is Glutamyl-tRNA reductase.